The sequence spans 453 residues: Validoxylamine A glucosyltransferase (453 aa).

The protein belongs to the glycosyltransferase 2 family. It depends on Mn(2+) as a cofactor.

It carries out the reaction validoxylamine A + UDP-alpha-D-glucose = validamycin A + UDP + H(+). In terms of biological role, involved in the biosynthesis of the antifungal agent validamycin A. Catalyzes the final attachment of glucose from UDP-alpha-D-glucose to validoxylamine A to yield validamycin A. This chain is Validoxylamine A glucosyltransferase, found in Streptomyces hygroscopicus subsp. limoneus.